Reading from the N-terminus, the 35-residue chain is Cupiennin-1b (35 aa).

Glu35 carries the glutamic acid 1-amide modification.

This sequence belongs to the cationic peptide 04 (cupiennin) family. 01 subfamily. Expressed by the venom gland.

It localises to the secreted. Functionally, has antimicrobial activity against E.coli, E.faecalis, P.aeruginosa, and S.aureus. Has insecticidal and hemolytic activities. Probably acts by disturbing membrane function with its amphipathic structure. This Cupiennius salei (American wandering spider) protein is Cupiennin-1b.